Reading from the N-terminus, the 191-residue chain is Small ribosomal subunit protein uS11m (191 aa).

Positions 37-62 (PRLEDSAARQNTEREAAPSRFSLYPP) are disordered. Positions 38 to 53 (RLEDSAARQNTEREAA) are enriched in basic and acidic residues.

The protein belongs to the universal ribosomal protein uS11 family. As to quaternary structure, component of the mitochondrial ribosome small subunit (28S) which comprises a 12S rRNA and about 30 distinct proteins.

It is found in the mitochondrion. The protein is Small ribosomal subunit protein uS11m (Mrps11) of Mus musculus (Mouse).